We begin with the raw amino-acid sequence, 101 residues long: Large ribosomal subunit protein uL24 (101 aa).

The protein belongs to the universal ribosomal protein uL24 family. In terms of assembly, part of the 50S ribosomal subunit.

Its function is as follows. One of two assembly initiator proteins, it binds directly to the 5'-end of the 23S rRNA, where it nucleates assembly of the 50S subunit. One of the proteins that surrounds the polypeptide exit tunnel on the outside of the subunit. This is Large ribosomal subunit protein uL24 from Borrelia recurrentis (strain A1).